The sequence spans 370 residues: Spermidine/putrescine import ATP-binding protein PotA 1 (370 aa).

An ABC transporter domain is found at 12–250 (VSIRAVRKVY…PGNRFVADFI (239 aa)). ATP is bound at residue 48–55 (GPSGCGKT).

It belongs to the ABC transporter superfamily. Spermidine/putrescine importer (TC 3.A.1.11.1) family. In terms of assembly, the complex is composed of two ATP-binding proteins (PotA), two transmembrane proteins (PotB and PotC) and a solute-binding protein (PotD).

The protein localises to the cell inner membrane. The enzyme catalyses ATP + H2O + polyamine-[polyamine-binding protein]Side 1 = ADP + phosphate + polyamineSide 2 + [polyamine-binding protein]Side 1.. In terms of biological role, part of the ABC transporter complex PotABCD involved in spermidine/putrescine import. Responsible for energy coupling to the transport system. The sequence is that of Spermidine/putrescine import ATP-binding protein PotA 1 from Pseudomonas aeruginosa (strain ATCC 15692 / DSM 22644 / CIP 104116 / JCM 14847 / LMG 12228 / 1C / PRS 101 / PAO1).